The following is a 312-amino-acid chain: Pyridoxal kinase (312 aa).

Met-1 bears the N-acetylmethionine mark. The pyridoxal 5'-phosphate site is built by Ser-12 and Thr-47. Positions 12 and 47 each coordinate pyridoxamine. A Phosphoserine modification is found at Ser-59. Residue Asp-113 participates in K(+) binding. Tyr-127 serves as a coordination point for pyridoxal 5'-phosphate. A K(+)-binding site is contributed by Thr-148. ADP is bound at residue Asn-150. Residue Asn-150 coordinates ATP. Ser-164 is modified (phosphoserine). Residue Thr-186 coordinates K(+). 186-187 provides a ligand contact to ADP; it reads TS. An ATP-binding site is contributed by 186 to 187; that stretch reads TS. At Ser-213 the chain carries Phosphoserine. ADP is bound by residues 223-226 and 233-234; these read MHKV and TG. Residues 223 to 226 and 233 to 234 each bind ATP; these read MHKV and TG. Residue 232–235 participates in pyridoxal 5'-phosphate binding; that stretch reads GTGD. Asp-235 contacts pyridoxamine. Asp-235 acts as the Proton acceptor in catalysis. Ser-285 carries the phosphoserine modification.

The protein belongs to the pyridoxine kinase family. As to quaternary structure, homodimer. Requires Zn(2+) as cofactor. Mg(2+) serves as cofactor. In terms of tissue distribution, ubiquitous.

Its subcellular location is the cytoplasm. The protein localises to the cytosol. The catalysed reaction is pyridoxal + ATP = pyridoxal 5'-phosphate + ADP + H(+). It catalyses the reaction pyridoxamine + ATP = pyridoxamine 5'-phosphate + ADP + H(+). It carries out the reaction pyridoxine + ATP = pyridoxine 5'-phosphate + ADP + H(+). It participates in cofactor metabolism; pyridoxal 5'-phosphate salvage; pyridoxal 5'-phosphate from pyridoxal: step 1/1. The protein operates within cofactor metabolism; pyridoxal 5'-phosphate salvage; pyridoxine 5'-phosphate from pyridoxine: step 1/1. It functions in the pathway cofactor metabolism; pyridoxal 5'-phosphate salvage; pyridoxamine 5'-phosphate from pyridoxamine: step 1/1. With respect to regulation, activated by K(+). Activity is increased in the presence of Na(+). Functionally, catalyzes the phosphorylation of the dietary vitamin B6 vitamers pyridoxal (PL), pyridoxine (PN) and pyridoxamine (PM) to form pyridoxal 5'-phosphate (PLP), pyridoxine 5'-phosphate (PNP) and pyridoxamine 5'-phosphate (PMP), respectively. PLP is the active form of vitamin B6, and acts as a cofactor for over 140 different enzymatic reactions. The sequence is that of Pyridoxal kinase (PDXK) from Ovis aries (Sheep).